Reading from the N-terminus, the 794-residue chain is Protocadherin beta-6 (794 aa).

Positions 1 to 27 (MMQTKVQNKKRQVAFFILLMLWGEVGS) are cleaved as a signal peptide. At 28–688 (ESIQYSVLEE…AQADLLTVYL (661 aa)) the chain is on the extracellular side. Cadherin domains are found at residues 34–132 (VLEE…APEF), 137–241 (MLLK…VPEF), 246–345 (YEAQ…APEL), 350–449 (FISP…APAF), and 454–559 (YTLF…SPFV). Asparagine 46 carries an N-linked (GlcNAc...) asparagine glycan. Cysteine 95 and cysteine 101 are oxidised to a cystine. Asparagine 183 carries an N-linked (GlcNAc...) asparagine glycan. N-linked (GlcNAc...) asparagine glycosylation occurs at asparagine 416. A glycan (N-linked (GlcNAc...) asparagine) is linked at asparagine 565. The 104-residue stretch at 566–669 (GSAPCTELVP…LVDGFSQPYL (104 aa)) folds into the Cadherin 6 domain. A helical transmembrane segment spans residues 689–709 (VVALASVSSLFLFSVLLFVAV). Topologically, residues 710 to 794 (RLCRRSRAAS…PTSRNSFPFS (85 aa)) are cytoplasmic. Residues 773 to 794 (PPQGTEREMEETPTSRNSFPFS) form a disordered region. Polar residues predominate over residues 784-794 (TPTSRNSFPFS).

As to quaternary structure, forms homodimers in trans (molecules expressed by two different cells). Forms promiscuous heterodimers in cis (at the plasma membrane of the same cell) with other protocadherins.

The protein resides in the cell membrane. Calcium-dependent cell-adhesion protein involved in cells self-recognition and non-self discrimination. Thereby, it is involved in the establishment and maintenance of specific neuronal connections in the brain. In Pan troglodytes (Chimpanzee), this protein is Protocadherin beta-6.